The chain runs to 542 residues: MTRYVFITGGVVSSLGKGLASAALAAVLQARGYRVRMRKLDPYLNVDPGTMSPTQHGEVFVTDDGAETDLDLGHYERFTGVPASRADNITTGRIYQDIIAKERRGDYLGATIQVIPHVTNAIKDFVLDGNDSFDFVLVEIGGTVGDIEGLPFFEAIRQLGQELPRGTCCYVHLTLLPYIPSAGELKTKPTQHSVKELRSIGIQPDILLCRCDRPIPMDERRKLALFCNVRQTAVIEALDVASIYEVPLSYRTAGLDREVLGHFGLEHGEEPDLGRWQTIAERVRNPEGEVSIAIVGKYTGLKDAYKSLTEALTHGGISHRVKVNLEWIEAEVFEREDPAPFLEGLNGILVPGGFGQRGAEGKIRAARYAREKRIPYLGICFGMQMAVIEAARSLAGMPEANSTEFGETAEPVVGLLTEWLRGNELERRAAAGDLGGTMRLGAYEAKLDPESKIAQIYGSEQISERHRHRYEVNMAYRERLEAKGLRFSGVSPDGLLPETVEHVGHPWFIGVQFHPELKSRPFEPHPLFKGFVGAAIEQSRLV.

An amidoligase domain region spans residues 1–265; sequence MTRYVFITGG…DREVLGHFGL (265 aa). A CTP-binding site is contributed by S13. S13 provides a ligand contact to UTP. ATP is bound by residues 14-19 and D71; that span reads SLGKGL. Mg(2+) is bound by residues D71 and E139. CTP is bound by residues 146 to 148, 186 to 191, and K222; these read DIE and KTKPTQ. Residues 186–191 and K222 each bind UTP; that span reads KTKPTQ. One can recognise a Glutamine amidotransferase type-1 domain in the interval 291-541; it reads SIAIVGKYTG…VGAAIEQSRL (251 aa). G353 provides a ligand contact to L-glutamine. The active-site Nucleophile; for glutamine hydrolysis is C380. L-glutamine-binding positions include 381–384, E404, and R469; that span reads FGMQ. Residues H514 and E516 contribute to the active site.

This sequence belongs to the CTP synthase family. Homotetramer.

It catalyses the reaction UTP + L-glutamine + ATP + H2O = CTP + L-glutamate + ADP + phosphate + 2 H(+). The catalysed reaction is L-glutamine + H2O = L-glutamate + NH4(+). The enzyme catalyses UTP + NH4(+) + ATP = CTP + ADP + phosphate + 2 H(+). It functions in the pathway pyrimidine metabolism; CTP biosynthesis via de novo pathway; CTP from UDP: step 2/2. With respect to regulation, allosterically activated by GTP, when glutamine is the substrate; GTP has no effect on the reaction when ammonia is the substrate. The allosteric effector GTP functions by stabilizing the protein conformation that binds the tetrahedral intermediate(s) formed during glutamine hydrolysis. Inhibited by the product CTP, via allosteric rather than competitive inhibition. Its function is as follows. Catalyzes the ATP-dependent amination of UTP to CTP with either L-glutamine or ammonia as the source of nitrogen. Regulates intracellular CTP levels through interactions with the four ribonucleotide triphosphates. The polypeptide is CTP synthase (Methylobacterium radiotolerans (strain ATCC 27329 / DSM 1819 / JCM 2831 / NBRC 15690 / NCIMB 10815 / 0-1)).